Here is a 558-residue protein sequence, read N- to C-terminus: Dihydroxy-acid dehydratase (558 aa).

Cys51 lines the [2Fe-2S] cluster pocket. Mg(2+) is bound at residue Asp83. Cys124 lines the [2Fe-2S] cluster pocket. 2 residues coordinate Mg(2+): Asp125 and Lys126. Lys126 carries the N6-carboxylysine modification. Cys196 is a [2Fe-2S] cluster binding site. Glu447 provides a ligand contact to Mg(2+). Ser473 acts as the Proton acceptor in catalysis.

The protein belongs to the IlvD/Edd family. As to quaternary structure, homodimer. It depends on [2Fe-2S] cluster as a cofactor. Requires Mg(2+) as cofactor.

It carries out the reaction (2R)-2,3-dihydroxy-3-methylbutanoate = 3-methyl-2-oxobutanoate + H2O. The catalysed reaction is (2R,3R)-2,3-dihydroxy-3-methylpentanoate = (S)-3-methyl-2-oxopentanoate + H2O. The protein operates within amino-acid biosynthesis; L-isoleucine biosynthesis; L-isoleucine from 2-oxobutanoate: step 3/4. Its pathway is amino-acid biosynthesis; L-valine biosynthesis; L-valine from pyruvate: step 3/4. Functionally, functions in the biosynthesis of branched-chain amino acids. Catalyzes the dehydration of (2R,3R)-2,3-dihydroxy-3-methylpentanoate (2,3-dihydroxy-3-methylvalerate) into 2-oxo-3-methylpentanoate (2-oxo-3-methylvalerate) and of (2R)-2,3-dihydroxy-3-methylbutanoate (2,3-dihydroxyisovalerate) into 2-oxo-3-methylbutanoate (2-oxoisovalerate), the penultimate precursor to L-isoleucine and L-valine, respectively. The sequence is that of Dihydroxy-acid dehydratase from Flavobacterium psychrophilum (strain ATCC 49511 / DSM 21280 / CIP 103535 / JIP02/86).